A 361-amino-acid polypeptide reads, in one-letter code: Chorismate synthase (361 aa).

Positions 48 and 54 each coordinate NADP(+). FMN-binding positions include 125 to 127 (RSS), 238 to 239 (NA), G278, 293 to 297 (KPTSS), and R319.

This sequence belongs to the chorismate synthase family. Homotetramer. FMNH2 is required as a cofactor.

It carries out the reaction 5-O-(1-carboxyvinyl)-3-phosphoshikimate = chorismate + phosphate. Its pathway is metabolic intermediate biosynthesis; chorismate biosynthesis; chorismate from D-erythrose 4-phosphate and phosphoenolpyruvate: step 7/7. Its function is as follows. Catalyzes the anti-1,4-elimination of the C-3 phosphate and the C-6 proR hydrogen from 5-enolpyruvylshikimate-3-phosphate (EPSP) to yield chorismate, which is the branch point compound that serves as the starting substrate for the three terminal pathways of aromatic amino acid biosynthesis. This reaction introduces a second double bond into the aromatic ring system. This is Chorismate synthase from Yersinia enterocolitica serotype O:8 / biotype 1B (strain NCTC 13174 / 8081).